Consider the following 253-residue polypeptide: MRMTANATIDPSEVARFDALGAQWWDPKGKMAPLHAINPVRLGFVRDVLVRHFGHDARSLRPLKGLRILDIGCGGGLLSEPLARMGADMVGVDPAPGNIVVAQSHADEAGVRVDYRQGTAEELADAGERFDVVLALEVVEHVADVGLFLRRAGEMVNPNGIMIVSTLNRTVKSFALAIVGAEYVLRWLPRGTHRWDKFITPAELEAEMGAAGFEMSELAGMVFDPLRGEWKIAADTDVNYFLVGKPAFHTSEG.

Arg-41, Gly-72, Asp-93, and Leu-136 together coordinate S-adenosyl-L-methionine.

It belongs to the methyltransferase superfamily. UbiG/COQ3 family.

The enzyme catalyses a 3-demethylubiquinol + S-adenosyl-L-methionine = a ubiquinol + S-adenosyl-L-homocysteine + H(+). The catalysed reaction is a 3-(all-trans-polyprenyl)benzene-1,2-diol + S-adenosyl-L-methionine = a 2-methoxy-6-(all-trans-polyprenyl)phenol + S-adenosyl-L-homocysteine + H(+). It functions in the pathway cofactor biosynthesis; ubiquinone biosynthesis. Its function is as follows. O-methyltransferase that catalyzes the 2 O-methylation steps in the ubiquinone biosynthetic pathway. The chain is Ubiquinone biosynthesis O-methyltransferase from Azorhizobium caulinodans (strain ATCC 43989 / DSM 5975 / JCM 20966 / LMG 6465 / NBRC 14845 / NCIMB 13405 / ORS 571).